Here is a 121-residue protein sequence, read N- to C-terminus: Small ribosomal subunit protein eS24 (121 aa).

The protein belongs to the eukaryotic ribosomal protein eS24 family.

This chain is Small ribosomal subunit protein eS24, found in Pyrobaculum arsenaticum (strain DSM 13514 / JCM 11321 / PZ6).